The primary structure comprises 689 residues: DNA polymerase epsilon subunit B (689 aa).

Over residues 98-115 (EWSHEHPIQHEENILGRT) the composition is skewed to basic and acidic residues. The segment at 98–155 (EWSHEHPIQHEENILGRTDDDENNSDDEMPIAADSSLQNVSLSSPMRQPTERDEYKQP) is disordered. Over residues 116-126 (DDDENNSDDEM) the composition is skewed to acidic residues. Residue Ser122 is modified to Phosphoserine. Over residues 132 to 144 (SSLQNVSLSSPMR) the composition is skewed to polar residues. The residue at position 141 (Ser141) is a Phosphoserine; by CDC28. Residues 146 to 155 (PTERDEYKQP) show a composition bias toward basic and acidic residues. Phosphoserine is present on Ser613.

Belongs to the DNA polymerase epsilon subunit B family. In terms of assembly, DNA polymerase epsilon is a heterotetramer consisting of POL2, DPB2, DPB3 and DPB4. In terms of processing, phosphorylated in a cell cycle dependent manner during late G1 phase. Phosphorylation may facilitate the interaction with POL2 or the activity of DNA polymerase II. Phosphorylation is independent of DNA replication but dependent upon CDC28 in vivo. Both Ser-141 and Ser-613 are phosphorylated in vivo, but in vitro only Ser-141 is phosphorylated by CDC28.

It localises to the cytoplasm. The protein localises to the nucleus. Its function is as follows. As accessory component of the DNA polymerase epsilon complex participates in chromosomal DNA replication. It is required during synthesis of the leading and lagging DNA strands at the replication fork and binds at/or near replication origins and moves along DNA with the replication fork. It has 3'-5' proofreading exonuclease activity that correct errors arising during DNA replication. It is also involved in DNA synthesis during DNA repair. The chain is DNA polymerase epsilon subunit B (DPB2) from Saccharomyces cerevisiae (strain ATCC 204508 / S288c) (Baker's yeast).